The primary structure comprises 363 residues: Flagellar P-ring protein (363 aa).

The first 20 residues, 1 to 20 (MKCKLIFAVFMLAFSMPSQA), serve as a signal peptide directing secretion.

The protein belongs to the FlgI family. In terms of assembly, the basal body constitutes a major portion of the flagellar organelle and consists of four rings (L,P,S, and M) mounted on a central rod.

Its subcellular location is the periplasm. It is found in the bacterial flagellum basal body. Functionally, assembles around the rod to form the L-ring and probably protects the motor/basal body from shearing forces during rotation. In Shewanella oneidensis (strain ATCC 700550 / JCM 31522 / CIP 106686 / LMG 19005 / NCIMB 14063 / MR-1), this protein is Flagellar P-ring protein.